The sequence spans 292 residues: GID complex substrate-recognition subunit 10 (292 aa).

Belongs to the GID4/VID24 family. As to quaternary structure, substrate-recognition component of the GID/CTLH ubiquitin ligase complex. In the absence of stress, the complex exists as an inactive anticipatory complex (GID(Ant)), composed of VID30/GID1, the E3 ubiquitin-ligase RMD5/GID2, VID28/GID5, GID8, and the RING-like subunit FYV10/GID9, awaiting a substrate receptor to form the active E3 ligase complex. When cells are shifted to glucose-containing medium, the substrate receptor VID24/GID4 is induced and becomes part of the complex, named GID(SR4). Under osmotic or heat stress, the substrate receptor GID10 is induced and becomes part of the complex, named GID(SR10). Interacts with proteins that have an N-terminal Pro/N-degron, including ART2.

Substrate-recognition component of the GID E3 ligase complex recruiting N termini and catalyzing ubiquitination of proteins targeted for degradation. GID E3 is regulated through assembly with interchangeable N-degron-binding substrate receptors induced by distinct environmental perturbations. Required for the adaptation to osmotic or heat stress. Required for the regulation of protein levels of the adapter protein ART2, a component of the ART-Rsp5 ubiquitin ligase pathway, part of the plasma membrane quality control. Specific for substrates with an N-terminal Pro (Pro/N-degron), including ART2. Has high affinity for the N-terminal sequence Pro-Tyr-Ile-Thr, and also recognizes nonproline residues such as Met-Tyr-Ile-Thr-Val or Val-Cys-Phe-His. The chain is GID complex substrate-recognition subunit 10 from Saccharomyces cerevisiae (strain ATCC 204508 / S288c) (Baker's yeast).